Reading from the N-terminus, the 356-residue chain is Inositol phosphoceramide mannosyltransferase 3 (356 aa).

The chain crosses the membrane as a helical span at residues 4–24; sequence ILFYFFFFLTLILSATVYLFG. N-linked (GlcNAc...) asparagine glycosylation is found at Asn52 and Asn146. 2 consecutive transmembrane segments (helical) span residues 197-217 and 269-289; these read FPYL…IWSA and WAIF…FIFG. Phosphoserine is present on residues Ser307, Ser353, and Ser355.

This sequence belongs to the glycosyltransferase 32 family.

Its subcellular location is the endoplasmic reticulum membrane. The protein resides in the golgi apparatus. It is found in the cis-Golgi network membrane. It localises to the trans-Golgi network membrane. With imt1 and imt2, is required for the synthesis of mannosylinositol phosphoceramide (MIPC). Catalyzes the addition of mannosyl to inositol phosphoceramide (IPC). MIPC is essential for cell morphology, cell-surface distribution of ergosterol, localization for plasma-membrane transporters, and lipid-raft-mediated endocytosis of plasma membrane proteins to the vacuole. The chain is Inositol phosphoceramide mannosyltransferase 3 from Schizosaccharomyces pombe (strain 972 / ATCC 24843) (Fission yeast).